Reading from the N-terminus, the 343-residue chain is Heme A synthase (343 aa).

8 helical membrane passes run 13–33 (VALW…VGGA), 96–116 (HRLL…FFLI), 130–150 (VLLG…SSGL), 165–185 (LGLA…AWAG), 197–217 (GWAL…ALVA), 258–278 (LHHR…GVAA), 290–310 (LTAF…IWTL), and 311–331 (MTAV…ILLA). Residue H260 coordinates heme. H322 is a heme binding site.

The protein belongs to the COX15/CtaA family. Type 2 subfamily. Interacts with CtaB. It depends on heme b as a cofactor.

The protein resides in the cell membrane. The catalysed reaction is Fe(II)-heme o + 2 A + H2O = Fe(II)-heme a + 2 AH2. It participates in porphyrin-containing compound metabolism; heme A biosynthesis; heme A from heme O: step 1/1. Catalyzes the conversion of heme O to heme A by two successive hydroxylations of the methyl group at C8. The first hydroxylation forms heme I, the second hydroxylation results in an unstable dihydroxymethyl group, which spontaneously dehydrates, resulting in the formyl group of heme A. The sequence is that of Heme A synthase from Caulobacter sp. (strain K31).